Consider the following 276-residue polypeptide: Dermonecrotic toxin LlSicTox-alphaIV2ii (276 aa).

The active site involves His5. 2 residues coordinate Mg(2+): Glu25 and Asp27. The active-site Nucleophile is His41. 2 disulfide bridges follow: Cys45-Cys51 and Cys47-Cys193. Asp85 serves as a coordination point for Mg(2+).

The protein belongs to the arthropod phospholipase D family. Class II subfamily. Mg(2+) is required as a cofactor. As to expression, expressed by the venom gland.

The protein localises to the secreted. The enzyme catalyses an N-(acyl)-sphingosylphosphocholine = an N-(acyl)-sphingosyl-1,3-cyclic phosphate + choline. It carries out the reaction an N-(acyl)-sphingosylphosphoethanolamine = an N-(acyl)-sphingosyl-1,3-cyclic phosphate + ethanolamine. It catalyses the reaction a 1-acyl-sn-glycero-3-phosphocholine = a 1-acyl-sn-glycero-2,3-cyclic phosphate + choline. The catalysed reaction is a 1-acyl-sn-glycero-3-phosphoethanolamine = a 1-acyl-sn-glycero-2,3-cyclic phosphate + ethanolamine. Dermonecrotic toxins cleave the phosphodiester linkage between the phosphate and headgroup of certain phospholipids (sphingolipid and lysolipid substrates), forming an alcohol (often choline) and a cyclic phosphate. This toxin acts on sphingomyelin (SM). It may also act on ceramide phosphoethanolamine (CPE), lysophosphatidylcholine (LPC) and lysophosphatidylethanolamine (LPE), but not on lysophosphatidylserine (LPS), and lysophosphatidylglycerol (LPG). It acts by transphosphatidylation, releasing exclusively cyclic phosphate products as second products. Induces dermonecrosis, hemolysis, increased vascular permeability, edema, inflammatory response, and platelet aggregation. The chain is Dermonecrotic toxin LlSicTox-alphaIV2ii from Loxosceles laeta (South American recluse spider).